Reading from the N-terminus, the 591-residue chain is CDK5RAP3 protein homolog (591 aa).

Low complexity predominate over residues 232 to 250 (RAGAPSSAKGPASSASAPP). 2 disordered regions span residues 232 to 252 (RAGA…PPAL) and 269 to 303 (TAPP…DAGG). The span at 279–303 (AGAGASGQGGGIEIDWGDSGGDAGG) shows a compositional bias: gly residues. 3 short sequence motifs (shuffled ATG8-binding motif) span residues 311 to 314 (IDWD), 334 to 337 (INWD), and 369 to 372 (IDWD). Positions 386-401 (NNRAGDVAEGEAAASL) are enriched in low complexity. Positions 386-416 (NNRAGDVAEGEAAASLSGGGGGGASSGDPDD) are disordered.

Belongs to the CDK5RAP3 family. Substrate adapter component of the UFM1 ribosome E3 ligase (UREL) complex. Interacts with ATG8 family proteins.

Its function is as follows. Substrate adapter of E3 ligase complexes mediating ufmylation, the covalent attachment of the ubiquitin-like modifier UFM1 to substrate proteins, and which is involved in various processes, such as ribosome recycling and reticulophagy (also called ER-phagy). The protein is CDK5RAP3 protein homolog of Chlamydomonas reinhardtii (Chlamydomonas smithii).